The sequence spans 31 residues: Cyclotide mech-6 (31 aa).

A cross-link (cyclopeptide (Gly-Asn)) is located at residues 1–31 (GVIPCGESCVFIPCISSVVGCTCKNKVCYRN). Cystine bridges form between Cys-5/Cys-21, Cys-9/Cys-23, and Cys-14/Cys-28.

In terms of processing, this is a cyclic peptide. Post-translationally, contains 3 disulfide bonds.

Its function is as follows. Probably participates in a plant defense mechanism (Potential). Binds to and induces leakage in phospholipd membranes, particularly ones containing 1-palmitoyl-2-oleophosphatidylethanolamine (POPE). This chain is Cyclotide mech-6, found in Melicytus chathamicus (Chatham Island mahoe).